A 671-amino-acid chain; its full sequence is tRNA(Met) cytidine acetyltransferase TmcA (671 aa).

Residues Gln180, 202 to 211, and Arg319 each bind ATP; that span reads GRGKSALAGQ. Residues 349 to 531 form the N-acetyltransferase domain; the sequence is IRFSAFTQAL…SGCYTAMALL (183 aa). Residues 461-463, 468-474, Glu499, and Arg506 contribute to the acetyl-CoA site; these read IAV and QREGIGQ.

It belongs to the RNA cytidine acetyltransferase family. TmcA subfamily.

It is found in the cytoplasm. It carries out the reaction cytidine(34) in elongator tRNA(Met) + acetyl-CoA + ATP + H2O = N(4)-acetylcytidine(34) in elongator tRNA(Met) + ADP + phosphate + CoA + H(+). Catalyzes the formation of N(4)-acetylcytidine (ac(4)C) at the wobble position of tRNA(Met), by using acetyl-CoA as an acetyl donor and ATP (or GTP). This chain is tRNA(Met) cytidine acetyltransferase TmcA, found in Citrobacter koseri (strain ATCC BAA-895 / CDC 4225-83 / SGSC4696).